The following is a 295-amino-acid chain: sn-glycerol-3-phosphate transport system permease protein UgpA (295 aa).

Topologically, residues 1 to 11 (MSSSRPVFRSR) are cytoplasmic. A helical membrane pass occupies residues 12–32 (WLPYLLVAPQLIITVIFFIWP). The Periplasmic portion of the chain corresponds to 33 to 80 (AGEALWYSLQSVDPFGFSSRFVGLDNFVALFHDSYYIDSFWTTIKFST). The 209-residue stretch at 76 to 284 (IKFSTFVTVS…FLVIVLTVMQ (209 aa)) folds into the ABC transmembrane type-1 domain. Residues 81-101 (FVTVSGLLVSLFFAALVEYIV) form a helical membrane-spanning segment. Residues 102–109 (RGSRFYQT) lie on the Cytoplasmic side of the membrane. A helical transmembrane segment spans residues 110–130 (LMLLPYAVAPAVAAVLWIFLF). Residues 131–156 (NPGRGLITHFLAEFGYDWNHAQNSGQ) are Periplasmic-facing. A helical transmembrane segment spans residues 157 to 177 (AMFLVVFASVWKQISYNFLFF). The Cytoplasmic portion of the chain corresponds to 178–207 (YAALQSIPRSLIEAAAIDGAGPIRRFFKIA). Residues 208–228 (LPLIAPVSFFLLVVNLVYAFF) traverse the membrane as a helical segment. The Periplasmic segment spans residues 229–262 (DTFPVIDAATSGGPVQATTTLIYKIYREGFTGLD). The helical transmembrane segment at 263 to 283 (LASSAAQSVVLMFLVIVLTVM) threads the bilayer. Over 284-295 (QFRYVESKVRYQ) the chain is Cytoplasmic.

The protein belongs to the binding-protein-dependent transport system permease family. UgpAE subfamily. In terms of assembly, the complex is composed of two ATP-binding proteins (UgpC), two transmembrane proteins (UgpA and UgpE) and a solute-binding protein (UgpB).

It localises to the cell inner membrane. In terms of biological role, part of the ABC transporter complex UgpBAEC involved in sn-glycerol-3-phosphate (G3P) import. Probably responsible for the translocation of the substrate across the membrane. In Escherichia coli O157:H7, this protein is sn-glycerol-3-phosphate transport system permease protein UgpA (ugpA).